Consider the following 967-residue polypeptide: MTETASGPARSSRAKGTKAGKGLRVERVHTTPGVHPYDEVAWERRDVVMTNWRDGSVNFEQRGVEFPEFWSVNAVNIVTSKYFRGAVGTPQREVSLKQLIDRIVKTYRKAGEDNKYFASPADAEIFEHELAYALLHQIFSFNSPVWFNVGTPQPQQVSACFILSVDDSMESILDWYKEEGMIFKGGSGAGLNLSRIRSSKELLSSGGNASGPVSFMRGADASAGTIKSGGATRRAAKMVILDVDHPDIEDFIQTKVKEEEKIRALRDAGFDMDLGGDDITSVQYQNANNSVRVNDTFMKAVQDGGKFGLTSRMTGEVIEEVDAKALFRKMAEAAWACADPGIQYDDTINAWHTCPESGRINGSNPCSEYMHLDNTSCNLASLNLMKFLKDDGKGNQSFDAERFSKVVELVITAMDISICFADFPTQKIGENTRAFRQLGIGYANLGALLMATGHAYDSDGGRALAGAITSLMTGTSYRRSAELAAIVGPYDGYARNAKPHLRVMKQHSDENAKAVRMDDLDTPIWAAATEAWQDVLRLGEKNGFRNSQASVIAPTGTIGLAMSCDTTGLEPDLALVKFKKLVGGGSMQIVNGTVPQALRRLGYQEEQIEAIVAHIAENGNVIDAPGLKPEHYEVFDCAMGERSISAMGHVRMMAAIQPWISGALSKTVNLPESATVEDVEEVYFEAWKMGVKALAIYRDNCKVGQPLSAKTKTVKDTEKAEITEKTEAAIRETVEKVVEYRPVRKRLPKGRPGITTSFTVGGAEGYMTANSYPDDGLGEVFLKMSKQGSTLAGMMDAFSIAVSVGLQYGVPLETYVSKFTNMRFEPAGMTDDPDVRMAQSIVDYIFRRLALDFLPFETRSALGIHSAEERQRHLETGSYEPSDDELDVEGLAQSAPRAQELVAVATPKAEAEAAKPAPQQAHTSAELVEMQLGIQADAPLCFSCGTKMQRAGSCYICEGCGSTSGCS.

Residues 1 to 23 (MTETASGPARSSRAKGTKAGKGL) are disordered. Substrate is bound by residues Ser-143, 159–160 (AC), Gly-188, 364–368 (NPCSE), and 554–558 (PTGTI). Cys-160 and Cys-377 form a disulfide bridge. Asn-364 functions as the Proton acceptor in the catalytic mechanism. The active-site Cysteine radical intermediate is the Cys-366. The active-site Proton acceptor is Glu-368.

It belongs to the ribonucleoside diphosphate reductase class-2 family. Adenosylcob(III)alamin serves as cofactor.

The enzyme catalyses a 2'-deoxyribonucleoside 5'-diphosphate + [thioredoxin]-disulfide + H2O = a ribonucleoside 5'-diphosphate + [thioredoxin]-dithiol. Its function is as follows. Catalyzes the reduction of ribonucleotides to deoxyribonucleotides. May function to provide a pool of deoxyribonucleotide precursors for DNA repair during oxygen limitation and/or for immediate growth after restoration of oxygen. The protein is Vitamin B12-dependent ribonucleotide reductase (nrdJ) of Streptomyces coelicolor (strain ATCC BAA-471 / A3(2) / M145).